The primary structure comprises 488 residues: BRAP2 RING ZnF UBP domain-containing protein 1 (488 aa).

The segment at 174–214 (CPICLERLDPDTSGIVSTLCDHSFQCSCTSKWTYLSCQVCR) adopts an RING-type; degenerate zinc-finger fold. The UBP-type; degenerate zinc finger occupies 208–301 (LSCQVCRLCQ…GKSVEMSTSC (94 aa)). Zn(2+) contacts are provided by Cys-225, Cys-228, Cys-237, Cys-240, Cys-245, His-252, His-256, and His-262. A coiled-coil region spans residues 370-418 (EQIVVNTMQELQNKIEKCEEEKSGITEVNTKLIKEQDTWRKKAKEIEER). A disordered region spans residues 453 to 488 (MSSDTDGIREGTVLPVPISPEPVSSVRRQKKSNRRK). The segment covering 465–478 (VLPVPISPEPVSSV) has biased composition (low complexity). The span at 479-488 (RRQKKSNRRK) shows a compositional bias: basic residues.

As to quaternary structure, component of the heteromeric E3 ligase complex made of BRIZ1 and BRIZ2. Forms heterooligomers with BRIZ2 via coiled-coil domains.

The catalysed reaction is S-ubiquitinyl-[E2 ubiquitin-conjugating enzyme]-L-cysteine + [acceptor protein]-L-lysine = [E2 ubiquitin-conjugating enzyme]-L-cysteine + N(6)-ubiquitinyl-[acceptor protein]-L-lysine.. Its pathway is protein modification; protein ubiquitination. In terms of biological role, RING-type ubiquitin E3 ligase required for seed germination and post-germination growth. The polypeptide is BRAP2 RING ZnF UBP domain-containing protein 1 (Arabidopsis thaliana (Mouse-ear cress)).